A 347-amino-acid chain; its full sequence is 3-isopropylmalate dehydrogenase (347 aa).

Residues R94, R104, R128, and D219 each coordinate substrate. Residues D219, D243, and D247 each contribute to the Mg(2+) site. 279–291 is an NAD(+) binding site; that stretch reads GSAPDIAGQGKAD.

It belongs to the isocitrate and isopropylmalate dehydrogenases family. LeuB type 2 subfamily. Homodimer. Mg(2+) is required as a cofactor. It depends on Mn(2+) as a cofactor.

The protein localises to the cytoplasm. It catalyses the reaction (2R,3S)-3-isopropylmalate + NAD(+) = 4-methyl-2-oxopentanoate + CO2 + NADH. The protein operates within amino-acid biosynthesis; L-leucine biosynthesis; L-leucine from 3-methyl-2-oxobutanoate: step 3/4. Functionally, catalyzes the oxidation of 3-carboxy-2-hydroxy-4-methylpentanoate (3-isopropylmalate) to 3-carboxy-4-methyl-2-oxopentanoate. The product decarboxylates to 4-methyl-2 oxopentanoate. This chain is 3-isopropylmalate dehydrogenase, found in Streptomyces avermitilis (strain ATCC 31267 / DSM 46492 / JCM 5070 / NBRC 14893 / NCIMB 12804 / NRRL 8165 / MA-4680).